A 758-amino-acid polypeptide reads, in one-letter code: 5-methyltetrahydropteroyltriglutamate--homocysteine methyltransferase (758 aa).

Residues Arg-17 to Lys-20 and Lys-117 each bind 5-methyltetrahydropteroyltri-L-glutamate. L-homocysteine contacts are provided by residues Ile-434–Ser-436 and Glu-487. Residues Ile-434–Ser-436 and Glu-487 contribute to the L-methionine site. 5-methyltetrahydropteroyltri-L-glutamate contacts are provided by residues Arg-518–Cys-519 and Trp-564. Residue Asp-602 participates in L-homocysteine binding. Asp-602 lines the L-methionine pocket. Residue Glu-608 coordinates 5-methyltetrahydropteroyltri-L-glutamate. Residues His-644, Cys-646, and Glu-668 each coordinate Zn(2+). His-697 (proton donor) is an active-site residue. Cys-729 contributes to the Zn(2+) binding site.

Belongs to the vitamin-B12 independent methionine synthase family. Requires Zn(2+) as cofactor.

The catalysed reaction is 5-methyltetrahydropteroyltri-L-glutamate + L-homocysteine = tetrahydropteroyltri-L-glutamate + L-methionine. The protein operates within amino-acid biosynthesis; L-methionine biosynthesis via de novo pathway; L-methionine from L-homocysteine (MetE route): step 1/1. Catalyzes the transfer of a methyl group from 5-methyltetrahydrofolate to homocysteine resulting in methionine formation. This chain is 5-methyltetrahydropteroyltriglutamate--homocysteine methyltransferase, found in Serratia proteamaculans (strain 568).